Consider the following 1035-residue polypeptide: Sialidase A (1035 aa).

Positions 1–53 (MSYFRNRDIDIERNSMNRSVQERKCRYSIRKLSVGAVSMIVGAVVFGTSPVLA) are cleaved as a signal peptide. Positions 57–112 (ASEQPLANETQLSGESSTLTDTEKSQPSSETELSGNKQEQERKDKQEEKIPRDYYA) are disordered. Polar residues predominate over residues 61–92 (PLANETQLSGESSTLTDTEKSQPSSETELSGN). Residues 94-112 (QEQERKDKQEEKIPRDYYA) are compositionally biased toward basic and acidic residues. Arg347 is a binding site for substrate. Catalysis depends on Asp372, which acts as the Proton acceptor. BNR repeat units follow at residues 381-392 (RRSEDNGKTWGD), 539-550 (SYSDDDGKTWSA), and 607-618 (IYSDDHGKTWHA). Residue Glu647 is part of the active site. Arg663 provides a ligand contact to substrate. One copy of the BNR 4 repeat lies at 672–683 (ATSKDGGVTWEK). Positions 902 to 951 (GPLGTSGEEPAPTVEKPEYTGPLGTSGEEPAPTVEKPEYTGPLGTAGEEA) are disordered. Residues 1003–1007 (LPETG) carry the LPXTG sorting signal motif. Thr1006 carries the post-translational modification Pentaglycyl murein peptidoglycan amidated threonine. The propeptide at 1007–1035 (GNKESDLLASLGLTAFFLGLFTLGKKREQ) is removed by sortase.

The protein belongs to the glycosyl hydrolase 33 family.

It is found in the secreted. The protein resides in the cell wall. The catalysed reaction is Hydrolysis of alpha-(2-&gt;3)-, alpha-(2-&gt;6)-, alpha-(2-&gt;8)- glycosidic linkages of terminal sialic acid residues in oligosaccharides, glycoproteins, glycolipids, colominic acid and synthetic substrates.. This is Sialidase A (nanA) from Streptococcus pneumoniae.